A 306-amino-acid polypeptide reads, in one-letter code: Bifunctional protein FolD 1 (306 aa).

NADP(+) contacts are provided by residues 170 to 172 (GRG), T199, and V240. Residues 285-306 (ARRTRSSRTPVRLPDSGAPAGR) are disordered.

It belongs to the tetrahydrofolate dehydrogenase/cyclohydrolase family. As to quaternary structure, homodimer.

It catalyses the reaction (6R)-5,10-methylene-5,6,7,8-tetrahydrofolate + NADP(+) = (6R)-5,10-methenyltetrahydrofolate + NADPH. The catalysed reaction is (6R)-5,10-methenyltetrahydrofolate + H2O = (6R)-10-formyltetrahydrofolate + H(+). It functions in the pathway one-carbon metabolism; tetrahydrofolate interconversion. Catalyzes the oxidation of 5,10-methylenetetrahydrofolate to 5,10-methenyltetrahydrofolate and then the hydrolysis of 5,10-methenyltetrahydrofolate to 10-formyltetrahydrofolate. In Salinispora tropica (strain ATCC BAA-916 / DSM 44818 / JCM 13857 / NBRC 105044 / CNB-440), this protein is Bifunctional protein FolD 1.